Reading from the N-terminus, the 585-residue chain is MLSSFLMLSIISSLLTICVIFLVRMLYIKYTQNIMSHKIWLLVLVSTLIPLIPFYKISNFTFSKDMMNRNVSDTTSSVSHMLDGQQSSVTKDLAINVNQFETSNITYMILLIWVFGSLLCLFYMIKAFRQIDVIKSSSLESSYLNERLKVCQSKMQFYKKHITISYSSNIDNPMVFGLVKSQIVLPTVVVETMNDKEIEYIILHELSHVKSHDLIFNQLYVVFKMIFWFNPALYISKTMMDNDCEKVCDRNVLKILNRHEHIRYGESILKCSILKSQHINNVAAQYLLGFNSNIKERVKYIALYDSMPKPNRNKRIVAYIVCSISLLIQAPLLSAHVQQDKYETNVSYKKLNQLAPYFKGFDGSFVLYNEREQAYSIYNEPESKQRYSPNSTYKIYLALMAFDQNLLSLNHTEQQWDKHQYPFKEWNQDQNLNSSMKYSVNWYYENLNKHLRQDEVKSYLDLIEYGNEEISGNENYWNESSLKISAIEQVNLLKNMKQHNMHFDNKAIEKVENSMTLKQKDTYKYVGKTGTGIVNHKEANGWFVGYVETKDNTYYFATHLKGEDNANGEKAQQISERILKEMELI.

The interval 351–585 (LNQLAPYFKG…ERILKEMELI (235 aa)) is beta-lactamase-like.

The protein belongs to the peptidase M56 family.

In terms of biological role, penicillin-interactive protein and potential antirepressor. This is Methicillin resistance mecR1 protein (mecR1) from Staphylococcus aureus (strain Mu50 / ATCC 700699).